The sequence spans 142 residues: MGLRREARELALQMLYAQDTLQGSLRDTLRGFREGVETGERTREFAEALVQGVMEHREAIDQAIVARSKNWALSRMPRVDLNIMRMAAYELMFKRDIPKKVSINEAIEIAKKYGDKESPAFVNGILDELEACPKDEERSDTE.

It belongs to the NusB family.

Involved in transcription antitermination. Required for transcription of ribosomal RNA (rRNA) genes. Binds specifically to the boxA antiterminator sequence of the ribosomal RNA (rrn) operons. In Trichlorobacter lovleyi (strain ATCC BAA-1151 / DSM 17278 / SZ) (Geobacter lovleyi), this protein is Transcription antitermination protein NusB.